The sequence spans 132 residues: Small ribosomal subunit protein uS13 (132 aa).

Residues 101-125 are compositionally biased toward basic residues; that stretch reads RGLPVRGQRTKTNARTRKGPRKTVA. Residues 101–132 are disordered; sequence RGLPVRGQRTKTNARTRKGPRKTVANKKIETR.

Belongs to the universal ribosomal protein uS13 family. Part of the 30S ribosomal subunit. Forms a loose heterodimer with protein S19. Forms two bridges to the 50S subunit in the 70S ribosome.

Its function is as follows. Located at the top of the head of the 30S subunit, it contacts several helices of the 16S rRNA. In the 70S ribosome it contacts the 23S rRNA (bridge B1a) and protein L5 of the 50S subunit (bridge B1b), connecting the 2 subunits; these bridges are implicated in subunit movement. Contacts the tRNAs in the A and P-sites. The chain is Small ribosomal subunit protein uS13 from Ureaplasma parvum serovar 3 (strain ATCC 27815 / 27 / NCTC 11736).